Consider the following 288-residue polypeptide: 33 kDa chaperonin (288 aa).

2 cysteine pairs are disulfide-bonded: cysteine 236–cysteine 238 and cysteine 269–cysteine 272.

This sequence belongs to the HSP33 family. Under oxidizing conditions two disulfide bonds are formed involving the reactive cysteines. Under reducing conditions zinc is bound to the reactive cysteines and the protein is inactive.

Its subcellular location is the cytoplasm. Functionally, redox regulated molecular chaperone. Protects both thermally unfolding and oxidatively damaged proteins from irreversible aggregation. Plays an important role in the bacterial defense system toward oxidative stress. The sequence is that of 33 kDa chaperonin from Lactococcus lactis subsp. lactis (strain IL1403) (Streptococcus lactis).